A 392-amino-acid polypeptide reads, in one-letter code: Cyclic di-GMP phosphodiesterase RocR (392 aa).

Residues 5–126 enclose the Response regulatory domain; the sequence is NVLVLEDEPF…RITALLTRYN (122 aa). 4-aspartylphosphate is present on Asp-56. In terms of domain architecture, EAL spans 140–392; it reads ELPSVADVVR…QHFLDYCSGS (253 aa). Residues Glu-175, Asn-233, Glu-265, and Asp-295 each contribute to the Mg(2+) site. The active-site Proton acceptor is the Glu-352.

Homotetramer. Exhibits a highly unusual tetrameric structure arranged around a single dyad, with the four subunits adopting two distinctly different conformations, with only two active sites accessible for substrate binding. Interacts with RocS1. The cofactor is Mg(2+).

It carries out the reaction 3',3'-c-di-GMP + H2O = 5'-phosphoguanylyl(3'-&gt;5')guanosine + H(+). Its activity is regulated as follows. Phosphorylation of Asp-56 probably induces local conformational changes in the response regulatory domain. These structural changes are transmitted to the adjacent EAL domain, then the signal is further transmitted down to the active site. The phosphodiesterase activity is inhibited by Ca(2+) and Zn(2+). Phosphodiesterase activity is inhibited by a benzoisothiazolinone derivative that specifically inhibited RocR, but not some other phosphodiesterases. Its function is as follows. Phosphodiesterase (PDE) that catalyzes the hydrolysis of cyclic diguanylate (c-di-GMP) to 5'-pGpG. Cannot use cyclic AMP or cyclic GMP. Part of the RocSAR two-component regulatory signaling system (also known as the SadARS system), which regulates biofilm maturation, type III secretion and expression of the cup fimbrial-gene cluster. Negatively regulates the expression of cup genes by antagonizing the activity of RocA1. This chain is Cyclic di-GMP phosphodiesterase RocR, found in Pseudomonas aeruginosa (strain ATCC 15692 / DSM 22644 / CIP 104116 / JCM 14847 / LMG 12228 / 1C / PRS 101 / PAO1).